A 416-amino-acid polypeptide reads, in one-letter code: MRLAPQKPLLLSTVLHLLLSIWMLGFASLAGATVQEPLAASDTPKPVSAALFSSIERLSRLVDITYCVGNTGVWKPFACASRCNEFPTLTLERTWRTGILMSDSCGLIAVDHGTPRHDAGEGKDDPLAEKAIIVAFRGTYSLTNTIIDLSTIPQEYVPYPSPDDGGNEPPREPSHRCDNCTVHSGFLASWRHARKVVLPELKVLRQKYPEYPIRLVGHSLGGAVAMLAALEMRVSLGWRDTVVTTFGEPRVGNRQLCDYLNAVFELNLGDEMDPAEREYRRVTHADDPVPLLPPAEWGYSSHGGEFFISKKDLPPSVEDVLVCHGDHDENCIARGKSSAVSVPAGDYDDALSTLEEQDVMLADALPWIPARLKLWELFFAHRDYFWRLGLCVPGGDPANWGRKGGEGAAESISAEG.

A signal peptide spans 1-32; that stretch reads MRLAPQKPLLLSTVLHLLLSIWMLGFASLAGA. 2 disulfides stabilise this stretch: Cys67–Cys391 and Cys177–Cys180. Asn179 carries N-linked (GlcNAc...) asparagine glycosylation. Ser219 acts as the Nucleophile in catalysis. Active-site charge relay system residues include Asp287 and His381.

This sequence belongs to the AB hydrolase superfamily. Lipase family. Post-translationally, glycosylated.

The protein localises to the secreted. It carries out the reaction Deacetylation of xylans and xylo-oligosaccharides.. The enzyme catalyses a triacylglycerol + H2O = a diacylglycerol + a fatty acid + H(+). Lipolytic enzyme that possesses both lipase and acetylxylan esterase activity. Active towards p-nitrophenol esters of various carbon chain length with preference for medium-chain fatty acids (C-8). Also highly active on the acetylated compounds xylose tetra-acetate and oat spelt xylan. This Sodiomyces alcalophilus (Acremonium alcalophilum) protein is Lipase A.